The following is a 223-amino-acid chain: Deoxyribose-phosphate aldolase (223 aa).

The active-site Proton donor/acceptor is the D91. The active-site Schiff-base intermediate with acetaldehyde is the K153. K182 functions as the Proton donor/acceptor in the catalytic mechanism.

The protein belongs to the DeoC/FbaB aldolase family. DeoC type 1 subfamily.

Its subcellular location is the cytoplasm. The enzyme catalyses 2-deoxy-D-ribose 5-phosphate = D-glyceraldehyde 3-phosphate + acetaldehyde. Its pathway is carbohydrate degradation; 2-deoxy-D-ribose 1-phosphate degradation; D-glyceraldehyde 3-phosphate and acetaldehyde from 2-deoxy-alpha-D-ribose 1-phosphate: step 2/2. Functionally, catalyzes a reversible aldol reaction between acetaldehyde and D-glyceraldehyde 3-phosphate to generate 2-deoxy-D-ribose 5-phosphate. The chain is Deoxyribose-phosphate aldolase from Yersinia enterocolitica serotype O:8 / biotype 1B (strain NCTC 13174 / 8081).